Here is a 75-residue protein sequence, read N- to C-terminus: DNA-directed RNA polymerase subunit omega (75 aa).

This sequence belongs to the RNA polymerase subunit omega family. In cyanobacteria the RNAP catalytic core is composed of 2 alpha, 1 beta, 1 beta', 1 gamma and 1 omega subunit. When a sigma factor is associated with the core the holoenzyme is formed, which can initiate transcription.

The catalysed reaction is RNA(n) + a ribonucleoside 5'-triphosphate = RNA(n+1) + diphosphate. Promotes RNA polymerase assembly. Latches the N- and C-terminal regions of the beta' subunit thereby facilitating its interaction with the beta and alpha subunits. The polypeptide is DNA-directed RNA polymerase subunit omega (Cyanothece sp. (strain PCC 7425 / ATCC 29141)).